A 673-amino-acid polypeptide reads, in one-letter code: Sodium/myo-inositol cotransporter 2 (673 aa).

Residues 1–27 are Extracellular-facing; it reads MESATISPQPPQSDSLEAFPQKSMEPA. A helical transmembrane segment spans residues 28–48; that stretch reads DIAVLVLYFLFVLAVGLWSTV. Over 49 to 65 the chain is Cytoplasmic; it reads RTKRDTVKGYFLAGGDM. A helical membrane pass occupies residues 66–88; that stretch reads VWWPVGASLFASNVGSGHFIGLA. At 89 to 102 the chain is on the extracellular side; the sequence is GSGAAVGISVAAYE. A helical transmembrane segment spans residues 103–123; the sequence is LNGLFSVLMLAWVFLPIYIAG. The Cytoplasmic portion of the chain corresponds to 124 to 148; sequence QVTTMPEYLRRRFGGNRISITLAVL. The helical transmembrane segment at 149-169 threads the bilayer; that stretch reads YLFIYIFTKISVDMYAGAIFI. At 170 to 180 the chain is on the extracellular side; it reads QQSLHLDLYLA. A helical membrane pass occupies residues 181 to 201; it reads IVGLLAITALYTVAGGLAAVI. Topologically, residues 202 to 208 are cytoplasmic; the sequence is YTDALQT. A helical transmembrane segment spans residues 209 to 229; sequence VIMLIGAFILMGYSFAAVGGM. The Extracellular segment spans residues 230–272; that stretch reads EGLKDQYFLALASNRSENSSCGLPREDAFHIFRDPLTSDLPWP. A helical membrane pass occupies residues 273–293; it reads GILFGMSIPSLWYWCTDQVIV. At 294 to 308 the chain is on the cytoplasmic side; the sequence is QRSLAAKNLSHAKGG. The chain crosses the membrane as a helical span at residues 309-329; sequence SLMAAYLKVLPLFLMVFPGMV. The Extracellular portion of the chain corresponds to 330–375; sequence SRVLFPDQVACAHPDICQRVCSNPSGCSDIAYPKLVLELLPTGLRG. A helical membrane pass occupies residues 376–396; it reads LMMAVMVAALMSSLTSIFNSA. Residues 397 to 418 lie on the Cytoplasmic side of the membrane; the sequence is STIFTMDLWNHIRPRASERELM. The chain crosses the membrane as a helical span at residues 419-439; that stretch reads IVGRIFVFALVLVSILWIPIV. Topologically, residues 440–446 are extracellular; the sequence is QASQGGQ. The chain crosses the membrane as a helical span at residues 447–467; the sequence is LFIYIQSISSYLQPPVAMVFI. Residues 468-479 lie on the Cytoplasmic side of the membrane; the sequence is MGCFWKRTNEKG. A helical membrane pass occupies residues 480–500; sequence AFSGLILGLLLGLVRLILDFV. Over 501 to 521 the chain is Extracellular; it reads YAQPRCDQPDDRPAVVKDVHY. Residues 522-542 form a helical membrane-spanning segment; that stretch reads LYFSMILSFTTLITVVTVSWF. At 543–652 the chain is on the cytoplasmic side; it reads TETPSKEMVS…SLEENPLVKT (110 aa). The helical transmembrane segment at 653–673 threads the bilayer; sequence LLDVNCIVCISCAIFLWGYFA.

This sequence belongs to the sodium:solute symporter (SSF) (TC 2.A.21) family.

The protein localises to the membrane. The protein resides in the apical cell membrane. The enzyme catalyses myo-inositol(out) + 2 Na(+)(out) = myo-inositol(in) + 2 Na(+)(in). The catalysed reaction is 1D-chiro-inositol(out) + 2 Na(+)(out) = 1D-chiro-inositol(in) + 2 Na(+)(in). It catalyses the reaction D-glucose(out) + 2 Na(+)(out) = D-glucose(in) + 2 Na(+)(in). It carries out the reaction D-xylose(out) + 2 Na(+)(out) = D-xylose(in) + 2 Na(+)(in). Its activity is regulated as follows. MI transport activity inhibited by D-chiro-inositol (DCI), phlorizin (Pz) and sodium (Na(+)). Insulin increases D-chiro-inositol uptake. In terms of biological role, involved in the sodium-dependent cotransport of myo-inositol (MI) with a Na(+):MI stoichiometry of 2:1. Exclusively responsible for apical MI transport and absorption in intestine. Can also transport D-chiro-inositol (DCI) but not L-fucose. Exhibits stereospecific cotransport of both D-glucose and D-xylose. May induce apoptosis through the TNF-alpha, PDCD1 pathway. May play a role in the regulation of MI concentration in serum, involving reabsorption in at least the proximal tubule of the kidney. The sequence is that of Sodium/myo-inositol cotransporter 2 from Mus musculus (Mouse).